Here is a 60-residue protein sequence, read N- to C-terminus: MAVPKRRMSRSNTRSRRSQWKAAAPTLITCPNRACGQKTLPHIACPSCGTYKGRQVTAAV.

Residues 1 to 19 (MAVPKRRMSRSNTRSRRSQ) show a composition bias toward basic residues. The segment at 1–21 (MAVPKRRMSRSNTRSRRSQWK) is disordered.

It belongs to the bacterial ribosomal protein bL32 family.

This is Large ribosomal subunit protein bL32A from Nocardia farcinica (strain IFM 10152).